Reading from the N-terminus, the 150-residue chain is D-aminoacyl-tRNA deacylase (150 aa).

A Gly-cisPro motif, important for rejection of L-amino acids motif is present at residues 136 to 137; that stretch reads GP.

It belongs to the DTD family. As to quaternary structure, homodimer.

It localises to the cytoplasm. The enzyme catalyses glycyl-tRNA(Ala) + H2O = tRNA(Ala) + glycine + H(+). The catalysed reaction is a D-aminoacyl-tRNA + H2O = a tRNA + a D-alpha-amino acid + H(+). Functionally, an aminoacyl-tRNA editing enzyme that deacylates mischarged D-aminoacyl-tRNAs. Also deacylates mischarged glycyl-tRNA(Ala), protecting cells against glycine mischarging by AlaRS. Acts via tRNA-based rather than protein-based catalysis; rejects L-amino acids rather than detecting D-amino acids in the active site. By recycling D-aminoacyl-tRNA to D-amino acids and free tRNA molecules, this enzyme counteracts the toxicity associated with the formation of D-aminoacyl-tRNA entities in vivo and helps enforce protein L-homochirality. This is D-aminoacyl-tRNA deacylase from Staphylococcus aureus (strain bovine RF122 / ET3-1).